A 615-amino-acid chain; its full sequence is UvrABC system protein C (615 aa).

The region spanning 14-91 (TSPGCYIHKD…IKENKPKYNI (78 aa)) is the GIY-YIG domain. A UVR domain is found at 196–231 (NKIIDELKGKMAAAAQTMEFERAAEYRDLIQAIGTL).

It belongs to the UvrC family. In terms of assembly, interacts with UvrB in an incision complex.

Its subcellular location is the cytoplasm. Its function is as follows. The UvrABC repair system catalyzes the recognition and processing of DNA lesions. UvrC both incises the 5' and 3' sides of the lesion. The N-terminal half is responsible for the 3' incision and the C-terminal half is responsible for the 5' incision. This is UvrABC system protein C from Streptococcus pneumoniae serotype 19F (strain G54).